The chain runs to 197 residues: Recombination protein RecR (197 aa).

A C4-type zinc finger spans residues 55-70 (CVQCRDFTESEICTIC). The Toprim domain maps to 78–173 (QQLCVVESPA…RPSRLAQGMP (96 aa)).

The protein belongs to the RecR family.

Its function is as follows. May play a role in DNA repair. It seems to be involved in an RecBC-independent recombinational process of DNA repair. It may act with RecF and RecO. The chain is Recombination protein RecR from Xanthomonas oryzae pv. oryzae (strain MAFF 311018).